The chain runs to 223 residues: Protein-L-isoaspartate O-methyltransferase (223 aa).

S70 is a catalytic residue.

This sequence belongs to the methyltransferase superfamily. L-isoaspartyl/D-aspartyl protein methyltransferase family.

Its subcellular location is the cytoplasm. It carries out the reaction [protein]-L-isoaspartate + S-adenosyl-L-methionine = [protein]-L-isoaspartate alpha-methyl ester + S-adenosyl-L-homocysteine. Functionally, catalyzes the methyl esterification of L-isoaspartyl residues in peptides and proteins that result from spontaneous decomposition of normal L-aspartyl and L-asparaginyl residues. It plays a role in the repair and/or degradation of damaged proteins. This is Protein-L-isoaspartate O-methyltransferase from Saccharophagus degradans (strain 2-40 / ATCC 43961 / DSM 17024).